The sequence spans 37 residues: Large ribosomal subunit protein bL36 (37 aa).

It belongs to the bacterial ribosomal protein bL36 family.

The protein is Large ribosomal subunit protein bL36 (rpmJ) of Mycoplasmoides gallisepticum (strain R(low / passage 15 / clone 2)) (Mycoplasma gallisepticum).